The sequence spans 359 residues: Alanine racemase, biosynthetic (359 aa).

Lysine 34 acts as the Proton acceptor; specific for D-alanine in catalysis. At lysine 34 the chain carries N6-(pyridoxal phosphate)lysine. Arginine 129 contacts substrate. Tyrosine 255 functions as the Proton acceptor; specific for L-alanine in the catalytic mechanism. A substrate-binding site is contributed by methionine 303.

Belongs to the alanine racemase family. As to quaternary structure, monomer but homodimer in the presence of the substrate. Requires pyridoxal 5'-phosphate as cofactor.

The catalysed reaction is L-alanine = D-alanine. Its pathway is amino-acid biosynthesis; D-alanine biosynthesis; D-alanine from L-alanine: step 1/1. The protein operates within cell wall biogenesis; peptidoglycan biosynthesis. Its function is as follows. Catalyzes the interconversion of L-alanine and D-alanine. The chain is Alanine racemase, biosynthetic (alr) from Shigella dysenteriae.